We begin with the raw amino-acid sequence, 271 residues long: 3-methyl-2-oxobutanoate hydroxymethyltransferase (271 aa).

Residues aspartate 51 and aspartate 90 each contribute to the Mg(2+) site. 3-methyl-2-oxobutanoate-binding positions include 51–52, aspartate 90, and lysine 118; that span reads DS. Glutamate 120 serves as a coordination point for Mg(2+). Glutamate 186 functions as the Proton acceptor in the catalytic mechanism.

It belongs to the PanB family. As to quaternary structure, homodecamer; pentamer of dimers. The cofactor is Mg(2+).

Its subcellular location is the cytoplasm. The catalysed reaction is 3-methyl-2-oxobutanoate + (6R)-5,10-methylene-5,6,7,8-tetrahydrofolate + H2O = 2-dehydropantoate + (6S)-5,6,7,8-tetrahydrofolate. It functions in the pathway cofactor biosynthesis; (R)-pantothenate biosynthesis; (R)-pantoate from 3-methyl-2-oxobutanoate: step 1/2. Catalyzes the reversible reaction in which hydroxymethyl group from 5,10-methylenetetrahydrofolate is transferred onto alpha-ketoisovalerate to form ketopantoate. The sequence is that of 3-methyl-2-oxobutanoate hydroxymethyltransferase from Stenotrophomonas maltophilia (strain R551-3).